The following is a 267-amino-acid chain: MNALLSNPFKEGLRKGDTQIGLWLSSTTSYMAEIAATSGYDWLLIDGEHAPNTVQDLYHQLQAIAPYASQPVIRPIEGSKALIKQVLDIGAQTLLIPMVDTAEQARQVVSATRYPPLGQRGVGASVARAARWGRIDNYMAQANESLCLLVQVESKVALENLDAILEVEGIDGVFIGPADLSASLGYPDNAGHPEVQRIIEACIYRIRAAGKAAGFLAVDPAMAQKCLAWGANFVAVGVDTMLYTEALDNRLVMFKSVQSVSTAKRSY.

Residue His-49 is the Proton acceptor of the active site. Gln-151 is a binding site for substrate. Position 153 (Glu-153) interacts with Mg(2+). Substrate-binding residues include Ala-178 and Asp-179. Asp-179 provides a ligand contact to Mg(2+).

It belongs to the HpcH/HpaI aldolase family. KDR aldolase subfamily. In terms of assembly, homohexamer. It depends on Mg(2+) as a cofactor.

It carries out the reaction 2-dehydro-3-deoxy-L-rhamnonate = (S)-lactaldehyde + pyruvate. In terms of biological role, catalyzes the reversible retro-aldol cleavage of 2-keto-3-deoxy-L-rhamnonate (KDR) to pyruvate and lactaldehyde. This chain is 2-keto-3-deoxy-L-rhamnonate aldolase, found in Salmonella paratyphi A (strain ATCC 9150 / SARB42).